The following is a 261-amino-acid chain: Carnitinyl-CoA dehydratase (261 aa).

Glutamate 111 acts as the Nucleophile in catalysis. Residue glutamate 131 is the Proton acceptor of the active site.

Belongs to the enoyl-CoA hydratase/isomerase family.

The enzyme catalyses (R)-carnitinyl-CoA = crotonobetainyl-CoA + H2O. It participates in amine and polyamine metabolism; carnitine metabolism. Its function is as follows. Catalyzes the reversible dehydration of L-carnitinyl-CoA to crotonobetainyl-CoA. The protein is Carnitinyl-CoA dehydratase of Escherichia coli O6:K15:H31 (strain 536 / UPEC).